Here is a 617-residue protein sequence, read N- to C-terminus: Probable Xaa-Pro aminopeptidase P (617 aa).

The Mn(2+) site is built by aspartate 414, aspartate 425, glutamate 523, and glutamate 537.

The protein belongs to the peptidase M24B family. The cofactor is Mn(2+).

It catalyses the reaction Release of any N-terminal amino acid, including proline, that is linked to proline, even from a dipeptide or tripeptide.. Functionally, catalyzes the removal of a penultimate prolyl residue from the N-termini of peptides. This chain is Probable Xaa-Pro aminopeptidase P (AMPP), found in Ajellomyces capsulatus (strain G186AR / H82 / ATCC MYA-2454 / RMSCC 2432) (Darling's disease fungus).